The sequence spans 396 residues: Aldo-keto reductase ausK (396 aa).

Aspartate 76 serves as a coordination point for NADP(+). Catalysis depends on tyrosine 81, which acts as the Proton donor. Substrate is bound at residue histidine 156. Residues 186 to 187 (CN), glutamine 212, 241 to 251 (DALGSGKFQSR), and 317 to 325 (RKIQHLHDN) each bind NADP(+).

It belongs to the aldo/keto reductase family. Aldo/keto reductase 2 subfamily. As to quaternary structure, homodimer.

It participates in secondary metabolite biosynthesis; terpenoid biosynthesis. Aldo-keto reductase; part of the gene cluster that mediates the biosynthesis of calidodehydroaustin, a fungal meroterpenoid. The first step of the pathway is the synthesis of 3,5-dimethylorsellinic acid by the polyketide synthase ausA. 3,5-dimethylorsellinic acid is then prenylated by the polyprenyl transferase ausN. Further epoxidation by the FAD-dependent monooxygenase ausM and cyclization by the probable terpene cyclase ausL lead to the formation of protoaustinoid A. Protoaustinoid A is then oxidized to spiro-lactone preaustinoid A3 by the combined action of the FAD-binding monooxygenases ausB and ausC, and the dioxygenase ausE. Acid-catalyzed keto-rearrangement and ring contraction of the tetraketide portion of preaustinoid A3 by ausJ lead to the formation of preaustinoid A4. The aldo-keto reductase ausK, with the help of ausH, is involved in the next step by transforming preaustinoid A4 into isoaustinone which is in turn hydroxylated by the P450 monooxygenase ausI to form austinolide. The cytochrome P450 monooxygenase ausG modifies austinolide to austinol. Austinol is further acetylated to austin by the O-acetyltransferase ausP, which spontaneously changes to dehydroaustin. The cytochrome P450 monooxygenase ausR then converts dehydroaustin is into 7-dehydrodehydroaustin. The hydroxylation catalyzed by ausR permits the O-acetyltransferase ausQ to add an additional acetyl group to the molecule, leading to the formation of acetoxydehydroaustin. The short chain dehydrogenase ausT catalyzes the reduction of the double bond present between carbon atoms 1 and 2 to convert 7-dehydrodehydroaustin into 1,2-dihydro-7-hydroxydehydroaustin. AusQ catalyzes not only an acetylation reaction but also the addition of the PKS ausV diketide product to 1,2-dihydro-7-hydroxydehydroaustin, forming precalidodehydroaustin. Finally, the iron/alpha-ketoglutarate-dependent dioxygenase converts precalidodehydroaustin into calidodehydroaustin. The protein is Aldo-keto reductase ausK of Aspergillus calidoustus.